The chain runs to 985 residues: NAD kinase 2, chloroplastic (985 aa).

The transit peptide at 1-62 directs the protein to the chloroplast; sequence MFLCFCPCHV…KRRLRFVIRA (62 aa). Residues 335–380 form a calmodulin-binding region; the sequence is APKAEQVELFASIVSDSSKRPIYVHSKEGVWRTSAMVSRWKQYMTR. 2 disordered regions span residues 389–466 and 548–615; these read SEES…PPGN and FSNG…DEAG. 2 stretches are compositionally biased toward basic and acidic residues: residues 390–399 and 413–429; these read EESKRREVSE and VPDE…EVDS. Over residues 548–569 the composition is skewed to polar residues; the sequence is FSNGNVHASDNTNKSISDNRGN.

Belongs to the NAD kinase family. As to expression, expressed in leaves.

It is found in the plastid. It localises to the chloroplast. It catalyses the reaction NAD(+) + ATP = ADP + NADP(+) + H(+). Its function is as follows. Involved in chlorophyll synthesis and chloroplast protection against oxidative damage. This Arabidopsis thaliana (Mouse-ear cress) protein is NAD kinase 2, chloroplastic (NADK2).